The following is a 50-amino-acid chain: Large ribosomal subunit protein bL32c (50 aa).

The protein belongs to the bacterial ribosomal protein bL32 family.

The protein resides in the plastid. This chain is Large ribosomal subunit protein bL32c (rpl32), found in Euglena longa (Euglenophycean alga).